A 207-amino-acid chain; its full sequence is Holliday junction branch migration complex subunit RuvA (207 aa).

Residues 1–63 (MIGMLKGRVE…QDAITLFGFL (63 aa)) form a domain I region. The tract at residues 64–142 (DARSKRMFLQ…VDKIETGEPT (79 aa)) is domain II. The tract at residues 143–153 (STQRIPTDKGV) is flexible linker. The interval 153–207 (VEQVVEGLMSLGWKQADAQQAVDSVISSSGIALPLEEGNVPTVLRLALTSLDRGR) is domain III.

It belongs to the RuvA family. As to quaternary structure, homotetramer. Forms an RuvA(8)-RuvB(12)-Holliday junction (HJ) complex. HJ DNA is sandwiched between 2 RuvA tetramers; dsDNA enters through RuvA and exits via RuvB. An RuvB hexamer assembles on each DNA strand where it exits the tetramer. Each RuvB hexamer is contacted by two RuvA subunits (via domain III) on 2 adjacent RuvB subunits; this complex drives branch migration. In the full resolvosome a probable DNA-RuvA(4)-RuvB(12)-RuvC(2) complex forms which resolves the HJ.

It localises to the cytoplasm. Its function is as follows. The RuvA-RuvB-RuvC complex processes Holliday junction (HJ) DNA during genetic recombination and DNA repair, while the RuvA-RuvB complex plays an important role in the rescue of blocked DNA replication forks via replication fork reversal (RFR). RuvA specifically binds to HJ cruciform DNA, conferring on it an open structure. The RuvB hexamer acts as an ATP-dependent pump, pulling dsDNA into and through the RuvAB complex. HJ branch migration allows RuvC to scan DNA until it finds its consensus sequence, where it cleaves and resolves the cruciform DNA. The polypeptide is Holliday junction branch migration complex subunit RuvA (Bifidobacterium animalis subsp. lactis (strain AD011)).